We begin with the raw amino-acid sequence, 411 residues long: Peptide chain release factor subunit 1 (411 aa).

The protein belongs to the eukaryotic release factor 1 family. In terms of assembly, heterodimer of two subunits, one of which binds GTP.

The protein resides in the cytoplasm. Directs the termination of nascent peptide synthesis (translation) in response to the termination codons UAA, UAG and UGA. The sequence is that of Peptide chain release factor subunit 1 from Methanosphaera stadtmanae (strain ATCC 43021 / DSM 3091 / JCM 11832 / MCB-3).